The sequence spans 361 residues: Polyribonucleotide 5'-hydroxyl-kinase PH0197 (361 aa).

43–50 (GDVDTGKT) contributes to the ATP binding site.

The cofactor is a divalent metal cation.

The enzyme catalyses a 5'-end dephospho-2'-deoxyribonucleoside-DNA + ATP = a 5'-end 5'-phospho-2'-deoxyribonucleoside-DNA + ADP + H(+). It carries out the reaction a 5'-end dephospho-ribonucleoside-RNA + ATP = a 5'-end 5'-phospho-ribonucleoside-RNA + ADP + H(+). DNA kinase activity is inhibited by 250 mM sodium chloride whereas RNA kinase activity is unaffected. Functionally, polynucleotide kinase that can phosphorylate the 5'-hydroxyl groups of both single-stranded RNA (ssRNA) and single-stranded DNA (ssDNA). Exhibits a strong preference for ssRNA. In Pyrococcus horikoshii (strain ATCC 700860 / DSM 12428 / JCM 9974 / NBRC 100139 / OT-3), this protein is Polyribonucleotide 5'-hydroxyl-kinase PH0197.